The following is a 506-amino-acid chain: ATP synthase subunit alpha, mitochondrial (506 aa).

171–178 (GDRQTGKT) provides a ligand contact to ATP.

This sequence belongs to the ATPase alpha/beta chains family. In terms of assembly, F-type ATPases have 2 components, CF(1) - the catalytic core - and CF(0) - the membrane proton channel. CF(1) has five subunits: alpha(3), beta(3), gamma(1), delta(1), epsilon(1). CF(0) has three main subunits: a, b and c.

Its subcellular location is the mitochondrion. The protein resides in the mitochondrion inner membrane. Mitochondrial membrane ATP synthase (F(1)F(0) ATP synthase or Complex V) produces ATP from ADP in the presence of a proton gradient across the membrane which is generated by electron transport complexes of the respiratory chain. F-type ATPases consist of two structural domains, F(1) - containing the extramembraneous catalytic core, and F(0) - containing the membrane proton channel, linked together by a central stalk and a peripheral stalk. During catalysis, ATP synthesis in the catalytic domain of F(1) is coupled via a rotary mechanism of the central stalk subunits to proton translocation. Subunits alpha and beta form the catalytic core in F(1). Rotation of the central stalk against the surrounding alpha(3)beta(3) subunits leads to hydrolysis of ATP in three separate catalytic sites on the beta subunits. Subunit alpha does not bear the catalytic high-affinity ATP-binding sites. The chain is ATP synthase subunit alpha, mitochondrial (ATPA) from Beta vulgaris (Sugar beet).